Consider the following 114-residue polypeptide: uncharacterized protein (114 aa).

The first 19 residues, 1 to 19 (MKASYLVLIFISIFSMAQA), serve as a signal peptide directing secretion. Phosphoserine is present on S41.

The protein belongs to the protease inhibitor I9 family.

This is an uncharacterized protein from Saccharomyces cerevisiae (strain ATCC 204508 / S288c) (Baker's yeast).